The primary structure comprises 418 residues: Dihydrolipoyllysine-residue acetyltransferase component of pyruvate dehydrogenase complex (418 aa).

In terms of domain architecture, Lipoyl-binding spans 2–78 (PIKLLMPALS…PVNSLIAVLI (77 aa)). Lysine 43 carries the N6-lipoyllysine modification. The 38-residue stretch at 133 to 170 (FASPLAKRLAKIQNVRIEEIKGSGPHGRIIKQDVLSHK) folds into the Peripheral subunit-binding (PSBD) domain. Histidine 388 is an active-site residue.

It belongs to the 2-oxoacid dehydrogenase family. As to quaternary structure, forms a 24-polypeptide structural core with octahedral symmetry. (R)-lipoate serves as cofactor.

The enzyme catalyses N(6)-[(R)-dihydrolipoyl]-L-lysyl-[protein] + acetyl-CoA = N(6)-[(R)-S(8)-acetyldihydrolipoyl]-L-lysyl-[protein] + CoA. Functionally, the pyruvate dehydrogenase complex catalyzes the overall conversion of pyruvate to acetyl-CoA and CO(2). It contains multiple copies of three enzymatic components: pyruvate dehydrogenase (E1), dihydrolipoamide acetyltransferase (E2) and lipoamide dehydrogenase (E3). This is Dihydrolipoyllysine-residue acetyltransferase component of pyruvate dehydrogenase complex (pdhC) from Rickettsia bellii (strain RML369-C).